We begin with the raw amino-acid sequence, 277 residues long: Chitosanase (277 aa).

A signal peptide spans 1–35 (MKISMQKADFWKKAAISLLVFTMFFTLMMSETVFA). Glu-54 functions as the Proton donor in the catalytic mechanism. Asp-70 (nucleophile) is an active-site residue.

It belongs to the glycosyl hydrolase 46 family.

It localises to the secreted. The enzyme catalyses Endohydrolysis of beta-(1-&gt;4)-linkages between D-glucosamine residues in a partly acetylated chitosan.. Functionally, aids in the defense against invading fungal pathogens by degrading their cell wall chitosan. The sequence is that of Chitosanase (csn) from Bacillus subtilis (strain 168).